A 301-amino-acid polypeptide reads, in one-letter code: Ubiquinone biosynthesis protein COQ4, mitochondrial (301 aa).

Residues 1–46 (MEVTLKRSAALARQTTPLLRPLRPVATYPSNNNNNNNPTPQQRRPY) constitute a mitochondrion transit peptide. Residues 14–48 (QTTPLLRPLRPVATYPSNNNNNNNPTPQQRRPYSL) are disordered. Polar residues predominate over residues 38 to 48 (PTPQQRRPYSL). Zn(2+) is bound by residues histidine 185, aspartate 186, histidine 189, and glutamate 201.

This sequence belongs to the COQ4 family. In terms of assembly, component of a multi-subunit COQ enzyme complex, composed of at least COQ3, COQ4, COQ5, COQ6, COQ7 and COQ9. Requires Zn(2+) as cofactor.

Its subcellular location is the mitochondrion inner membrane. The catalysed reaction is a 4-hydroxy-3-methoxy-5-(all-trans-polyprenyl)benzoate + H(+) = a 2-methoxy-6-(all-trans-polyprenyl)phenol + CO2. The protein operates within cofactor biosynthesis; ubiquinone biosynthesis. Functionally, lyase that catalyzes the C1-decarboxylation of 4-hydroxy-3-methoxy-5-(all-trans-polyprenyl)benzoic acid into 2-methoxy-6-(all-trans-polyprenyl)phenol during ubiquinone biosynthesis. This is Ubiquinone biosynthesis protein COQ4, mitochondrial from Podospora anserina (strain S / ATCC MYA-4624 / DSM 980 / FGSC 10383) (Pleurage anserina).